We begin with the raw amino-acid sequence, 152 residues long: UPF0225 protein YchJ (152 aa).

The protein belongs to the UPF0225 family.

The polypeptide is UPF0225 protein YchJ (Escherichia coli O127:H6 (strain E2348/69 / EPEC)).